The primary structure comprises 293 residues: 4-hydroxy-tetrahydrodipicolinate synthase (293 aa).

Thr-47 serves as a coordination point for pyruvate. Catalysis depends on Tyr-136, which acts as the Proton donor/acceptor. The active-site Schiff-base intermediate with substrate is Lys-164. Position 206 (Ile-206) interacts with pyruvate.

Belongs to the DapA family. Homotetramer; dimer of dimers.

The protein resides in the cytoplasm. It catalyses the reaction L-aspartate 4-semialdehyde + pyruvate = (2S,4S)-4-hydroxy-2,3,4,5-tetrahydrodipicolinate + H2O + H(+). It functions in the pathway amino-acid biosynthesis; L-lysine biosynthesis via DAP pathway; (S)-tetrahydrodipicolinate from L-aspartate: step 3/4. Catalyzes the condensation of (S)-aspartate-beta-semialdehyde [(S)-ASA] and pyruvate to 4-hydroxy-tetrahydrodipicolinate (HTPA). This is 4-hydroxy-tetrahydrodipicolinate synthase from Listeria welshimeri serovar 6b (strain ATCC 35897 / DSM 20650 / CCUG 15529 / CIP 8149 / NCTC 11857 / SLCC 5334 / V8).